A 61-amino-acid polypeptide reads, in one-letter code: MAKKSLKVKQAKHQKFGVRNYTRCNNCGRPHAVLKKFGICRLCFRKYAYEGQIPGIRKASW.

Zn(2+) contacts are provided by Cys24, Cys27, Cys40, and Cys43.

This sequence belongs to the universal ribosomal protein uS14 family. Zinc-binding uS14 subfamily. As to quaternary structure, part of the 30S ribosomal subunit. Contacts proteins S3 and S10. Zn(2+) is required as a cofactor.

Functionally, binds 16S rRNA, required for the assembly of 30S particles and may also be responsible for determining the conformation of the 16S rRNA at the A site. This is Small ribosomal subunit protein uS14 from Mesoplasma florum (strain ATCC 33453 / NBRC 100688 / NCTC 11704 / L1) (Acholeplasma florum).